We begin with the raw amino-acid sequence, 210 residues long: Ion-translocating oxidoreductase complex subunit G (210 aa).

Residues 9-29 traverse the membrane as a helical segment; sequence SLVLALFAIAATALVTITYAL. FMN phosphoryl threonine is present on Thr-176.

The protein belongs to the RnfG family. As to quaternary structure, the complex is composed of six subunits: RnfA, RnfB, RnfC, RnfD, RnfE and RnfG. FMN serves as cofactor.

It is found in the cell inner membrane. Functionally, part of a membrane-bound complex that couples electron transfer with translocation of ions across the membrane. In Aliivibrio fischeri (strain ATCC 700601 / ES114) (Vibrio fischeri), this protein is Ion-translocating oxidoreductase complex subunit G.